Here is a 248-residue protein sequence, read N- to C-terminus: Biosynthetic peptidoglycan transglycosylase (248 aa).

The chain crosses the membrane as a helical span at residues 20-42 (WLRWLMAAPLLFAAASVLQVLIL).

Belongs to the glycosyltransferase 51 family.

It localises to the cell inner membrane. It carries out the reaction [GlcNAc-(1-&gt;4)-Mur2Ac(oyl-L-Ala-gamma-D-Glu-L-Lys-D-Ala-D-Ala)](n)-di-trans,octa-cis-undecaprenyl diphosphate + beta-D-GlcNAc-(1-&gt;4)-Mur2Ac(oyl-L-Ala-gamma-D-Glu-L-Lys-D-Ala-D-Ala)-di-trans,octa-cis-undecaprenyl diphosphate = [GlcNAc-(1-&gt;4)-Mur2Ac(oyl-L-Ala-gamma-D-Glu-L-Lys-D-Ala-D-Ala)](n+1)-di-trans,octa-cis-undecaprenyl diphosphate + di-trans,octa-cis-undecaprenyl diphosphate + H(+). It participates in cell wall biogenesis; peptidoglycan biosynthesis. Functionally, peptidoglycan polymerase that catalyzes glycan chain elongation from lipid-linked precursors. This chain is Biosynthetic peptidoglycan transglycosylase, found in Xanthomonas euvesicatoria pv. vesicatoria (strain 85-10) (Xanthomonas campestris pv. vesicatoria).